A 154-amino-acid polypeptide reads, in one-letter code: 3-hydroxyacyl-[acyl-carrier-protein] dehydratase FabZ (154 aa).

Residue histidine 59 is part of the active site.

The protein belongs to the thioester dehydratase family. FabZ subfamily.

The protein localises to the cytoplasm. It carries out the reaction a (3R)-hydroxyacyl-[ACP] = a (2E)-enoyl-[ACP] + H2O. Its function is as follows. Involved in unsaturated fatty acids biosynthesis. Catalyzes the dehydration of short chain beta-hydroxyacyl-ACPs and long chain saturated and unsaturated beta-hydroxyacyl-ACPs. In Bartonella bacilliformis (strain ATCC 35685 / KC583 / Herrer 020/F12,63), this protein is 3-hydroxyacyl-[acyl-carrier-protein] dehydratase FabZ.